A 370-amino-acid polypeptide reads, in one-letter code: Probable G-protein coupled receptor 85 (370 aa).

Residues 1-25 (MANYSHAADNILQNLSPLTAFLKLT) lie on the Extracellular side of the membrane. Residue Asn-3 is glycosylated (N-linked (GlcNAc...) asparagine). The chain crosses the membrane as a helical span at residues 26–46 (SLGFIIGVSVVGNLLISILLV). At 47-57 (KDKTLHRAPYY) the chain is on the cytoplasmic side. A helical transmembrane segment spans residues 58–78 (FLLDLCCSDILRSAICFPFVF). The Extracellular portion of the chain corresponds to 79 to 96 (NSVKNGSTWTYGTLTCKV). N-linked (GlcNAc...) asparagine glycosylation is present at Asn-83. A disulfide bridge links Cys-94 with Cys-172. Residues 97 to 117 (IAFLGVLSCFHTAFMLFCISV) form a helical membrane-spanning segment. Topologically, residues 118-137 (TRYLAIAHHRFYTKRLTFWT) are cytoplasmic. A helical membrane pass occupies residues 138–158 (CLAVICMVWTLSVAMAFPPVL). The Extracellular segment spans residues 159–188 (DVGTYSFIREEDQCTFQHRSFRANDSLGFM). N-linked (GlcNAc...) asparagine glycosylation occurs at Asn-182. Residues 189–209 (LLLALILLATQLVYLKLIFFV) traverse the membrane as a helical segment. The Cytoplasmic segment spans residues 210–286 (HDRRKMKPVQ…FKMEKRISRM (77 aa)). Residues 287–307 (FYIMTFLFLTLWGPYLVACYW) form a helical membrane-spanning segment. The Extracellular portion of the chain corresponds to 308 to 313 (RVFARG). Residues 314–334 (PVVPGGFLTAAVWMSFAQAGI) form a helical membrane-spanning segment. Over 335 to 370 (NPFVCIFSNRELRRCFSTTLLYCRKSRLPREPYCVI) the chain is Cytoplasmic.

This sequence belongs to the G-protein coupled receptor 1 family. In terms of assembly, interacts with DLG4 and DLG3. Highly expressed in brain and testis. Lower levels in small intestine, placenta and spleen. In brain regions, detected in all regions tested, but somewhat lower levels in the corpus callosum, medulla and spinal cord.

The protein resides in the cell membrane. The protein localises to the endoplasmic reticulum. Orphan receptor. In Homo sapiens (Human), this protein is Probable G-protein coupled receptor 85 (GPR85).